We begin with the raw amino-acid sequence, 258 residues long: Hydroxyacylglutathione hydrolase cytoplasmic (258 aa).

Zn(2+) is bound by residues His54 and His56. Asp58 and His59 together coordinate Fe cation. 2 residues coordinate Zn(2+): His112 and Asp135. Asp135 contributes to the Fe cation binding site. Substrate contacts are provided by residues 144 to 146 (KFF) and 174 to 176 (HEY). His174 provides a ligand contact to Fe cation.

The protein belongs to the metallo-beta-lactamase superfamily. Glyoxalase II family. Homodimer. The cofactor is Fe(2+). Zn(2+) is required as a cofactor. It depends on Fe(3+) as a cofactor. Mainly expressed in flowers and flower buds. Also detected in roots and leaves.

It is found in the cytoplasm. It catalyses the reaction an S-(2-hydroxyacyl)glutathione + H2O = a 2-hydroxy carboxylate + glutathione + H(+). The protein operates within secondary metabolite metabolism; methylglyoxal degradation; (R)-lactate from methylglyoxal: step 2/2. Functionally, thiolesterase that catalyzes the hydrolysis of S-D-lactoyl-glutathione to form glutathione and D-lactic acid. This chain is Hydroxyacylglutathione hydrolase cytoplasmic (GLX2-2), found in Arabidopsis thaliana (Mouse-ear cress).